The primary structure comprises 93 residues: Putative aspartate aminotransferase (93 aa).

The protein belongs to the class-I pyridoxal-phosphate-dependent aminotransferase family. As to quaternary structure, homodimer. The cofactor is pyridoxal 5'-phosphate.

The protein resides in the cytoplasm. The catalysed reaction is L-aspartate + 2-oxoglutarate = oxaloacetate + L-glutamate. The polypeptide is Putative aspartate aminotransferase (Methylorubrum extorquens (Methylobacterium dichloromethanicum)).